Reading from the N-terminus, the 391-residue chain is Phosphoglycerate kinase (391 aa).

Substrate is bound by residues 21-23 (DLN), arginine 36, 59-62 (HLGR), arginine 114, and arginine 147. ATP is bound by residues lysine 198, glutamate 315, and 344 to 347 (GGDT).

The protein belongs to the phosphoglycerate kinase family. As to quaternary structure, monomer.

It is found in the cytoplasm. The catalysed reaction is (2R)-3-phosphoglycerate + ATP = (2R)-3-phospho-glyceroyl phosphate + ADP. It participates in carbohydrate degradation; glycolysis; pyruvate from D-glyceraldehyde 3-phosphate: step 2/5. In Actinobacillus succinogenes (strain ATCC 55618 / DSM 22257 / CCUG 43843 / 130Z), this protein is Phosphoglycerate kinase.